Here is a 354-residue protein sequence, read N- to C-terminus: Opsin-1, short-wave-sensitive 2 (354 aa).

At 1-43 (MKQQQQTPELFEDFHMPITLDVSNISAYSPFLVPQDHLGHSGV) the chain is on the extracellular side. An N-linked (GlcNAc...) asparagine glycan is attached at N24. The chain crosses the membrane as a helical span at residues 44 to 68 (FMGMSAFMLFLFIAGTAINVLTIVC). Residues 69–80 (TIQYKKLRSHLN) are Cytoplasmic-facing. Residues 81-106 (YILVNLAISNLWVSVFGSSVAFYAFY) traverse the membrane as a helical segment. The Extracellular portion of the chain corresponds to 107 to 120 (KKYFVFGPIGCKIE). An intrachain disulfide couples C117 to C194. A helical transmembrane segment spans residues 121 to 140 (GFTSTIGGMVSLWSLAVVAL). Residues 141–159 (ERWLVICKPLGNFTFKTPH) lie on the Cytoplasmic side of the membrane. The helical transmembrane segment at 160–183 (AIAGCILPWCMALAAGLPPLLGWS) threads the bilayer. At 184-209 (RYIPEGLQCSCGPDWYTTNNKFNNES) the chain is on the extracellular side. The N-linked (GlcNAc...) asparagine glycan is linked to N207. The chain crosses the membrane as a helical span at residues 210 to 237 (YVMFLFCFCFAVPFSTIVFCYGQLLITL). At 238–259 (KLAAKAQADSASTQKAEREVTK) the chain is on the cytoplasmic side. A helical transmembrane segment spans residues 260-283 (MVVVMVFGFLICWGPYAIFAIWVV). Residues 284–291 (SNRGAPFD) are Extracellular-facing. The helical transmembrane segment at 292-316 (LRLATIPSCLCKASTVYNPVIYVLM) threads the bilayer. Residue K303 is modified to N6-(retinylidene)lysine. Residues 317 to 354 (NKQFRSCMMKMVFNKNIEEDEASSSSQVTQVSSVAPEK) are Cytoplasmic-facing.

This sequence belongs to the G-protein coupled receptor 1 family. Opsin subfamily. In terms of processing, phosphorylated on some or all of the serine and threonine residues present in the C-terminal region. In terms of tissue distribution, retinal long single cone outer segments.

It is found in the membrane. Visual pigments are the light-absorbing molecules that mediate vision. They consist of an apoprotein, opsin, covalently linked to cis-retinal. This is Opsin-1, short-wave-sensitive 2 (opn1sw2) from Danio rerio (Zebrafish).